A 149-amino-acid polypeptide reads, in one-letter code: Ricin B-like lectin (149 aa).

S2 bears the N-acetylserine mark. D21, G24, N39, and N47 together coordinate a carbohydrate. The segment at 110–112 is involved in dimerization; that stretch reads PNL.

Homodimer. The N-terminus is blocked.

Lectin specific for terminal, non-reducing N-acetylgalactosamine (Gal-NAc)-containing carbohydrates including N,N'-diacetyllactosediamine/LDN (GalNAcbeta1-4GlcNAc, LacdiNAc). Specific also for carbohydrates containing N-acetylglucosamine (-GlcNAc) or N-acetyllactosamine (-Galbeta1-4GlcNAc) at the reducing end. Agglutinates human blood group A, AB, B and O erythrocytes with a strong preference for group A. Agglutinates bovine erythrocytes with a very low specificity. Binds carbohydrates bivalently, which is required for its biological activity. Exhibits insecticidal activity against the fruit fly D.melanogaster, mosquito A.aegypti, and amoebozoa A.castellanii. Has anti-nutritional activity against Colorado potato beetle L.decemlineata, and against worm C.elegans. Has antiproliferative activity against human leukemic T-cells. Has an immunostimulatory effect on human antigen-presenting dendritic cells, which are subsequently able to induce efficient T-cell immune responses. This chain is Ricin B-like lectin, found in Clitocybe nebularis (Clouded agaric).